We begin with the raw amino-acid sequence, 165 residues long: ADP-ribosylation factor-like protein 3 (165 aa).

Glycine 2 carries the N-myristoyl glycine lipid modification. Serine 5 bears the Phosphoserine mark. Residues 24 to 31 (GLDNAGKT), 67 to 71 (DIGGQ), and 109 to 112 (NKQD) each bind GTP.

It belongs to the small GTPase superfamily. Arf family. As to quaternary structure, found in a complex with ARL3, RP2 and UNC119 (or UNC119B); RP2 induces hydrolysis of GTP ARL3 in the complex, leading to the release of UNC119 (or UNC119B). Interacts with RP2; interaction is direct and stimulated with the activated GTP-bound form of ARL3. Interacts with SYS1. Interacts with ARL2BP; the GTP-bound form interacts with ARL2BP. Microtubule-associated protein. Does not interact with TBCC. Interacts with RP2. Interacts with PDE6D; the interaction occurs specifically with the GTP-bound form of ARL3. Interacts with GGA1; the interaction recruits PKD1:PKD2 complex to trans-Golgi network and is required for ciliary targeting of PKD1:PKD2 complex. Interacts with DNAAF9.

Its subcellular location is the golgi apparatus membrane. The protein localises to the cytoplasm. It is found in the cytoskeleton. It localises to the spindle. The protein resides in the nucleus. Its subcellular location is the microtubule organizing center. The protein localises to the centrosome. It is found in the cell projection. It localises to the cilium. Functionally, small GTP-binding protein which cycles between an inactive GDP-bound and an active GTP-bound form, and the rate of cycling is regulated by guanine nucleotide exchange factors (GEF) and GTPase-activating proteins (GAP). Required for normal cytokinesis and cilia signaling. Requires assistance from GTPase-activating proteins (GAPs) like RP2 and PDE6D, in order to cycle between inactive GDP-bound and active GTP-bound forms. Required for targeting proteins to the cilium, including myristoylated NPHP3 and prenylated INPP5E. Targets NPHP3 to the ciliary membrane by releasing myristoylated NPHP3 from UNC119B cargo adapter into the cilium. Required for PKD1:PKD2 complex targeting from the trans-Golgi network to the cilium. The polypeptide is ADP-ribosylation factor-like protein 3 (ARL3) (Pongo abelii (Sumatran orangutan)).